Consider the following 295-residue polypeptide: Probable endonuclease 4 (295 aa).

Residues His-78, His-118, Glu-154, Asp-188, His-191, His-225, Asp-238, His-240, and Glu-270 each contribute to the Zn(2+) site.

It belongs to the AP endonuclease 2 family. Zn(2+) is required as a cofactor.

It catalyses the reaction Endonucleolytic cleavage to 5'-phosphooligonucleotide end-products.. In terms of biological role, endonuclease IV plays a role in DNA repair. It cleaves phosphodiester bonds at apurinic or apyrimidinic (AP) sites, generating a 3'-hydroxyl group and a 5'-terminal sugar phosphate. The chain is Probable endonuclease 4 from Vibrio campbellii (strain ATCC BAA-1116).